A 156-amino-acid polypeptide reads, in one-letter code: Small ribosomal subunit protein uS7 (156 aa).

This sequence belongs to the universal ribosomal protein uS7 family. In terms of assembly, part of the 30S ribosomal subunit. Contacts proteins S9 and S11.

One of the primary rRNA binding proteins, it binds directly to 16S rRNA where it nucleates assembly of the head domain of the 30S subunit. Is located at the subunit interface close to the decoding center, probably blocks exit of the E-site tRNA. In Edwardsiella ictaluri (strain 93-146), this protein is Small ribosomal subunit protein uS7.